The primary structure comprises 223 residues: Endonuclease V (223 aa).

Mg(2+) contacts are provided by Asp-35 and Asp-103.

The protein belongs to the endonuclease V family. It depends on Mg(2+) as a cofactor.

It is found in the cytoplasm. It carries out the reaction Endonucleolytic cleavage at apurinic or apyrimidinic sites to products with a 5'-phosphate.. DNA repair enzyme involved in the repair of deaminated bases. Selectively cleaves double-stranded DNA at the second phosphodiester bond 3' to a deoxyinosine leaving behind the intact lesion on the nicked DNA. The protein is Endonuclease V of Salmonella schwarzengrund (strain CVM19633).